The primary structure comprises 433 residues: Inositol hexakisphosphate kinase 1 (433 aa).

The interval E100 to S160 is disordered. Residues P113–H123 show a composition bias toward basic residues. Residues S139 to A149 show a composition bias toward polar residues. Residues K150 to S160 are compositionally biased toward basic and acidic residues. S151 is subject to Phosphoserine. A substrate-binding site is contributed by P220–G228. Positions E359–P383 are disordered.

This sequence belongs to the inositol phosphokinase (IPK) family. Highly expressed in brain and testis. Detected at much lower levels in heart, kidney, liver, lung and spleen.

It is found in the cytoplasm. It localises to the nucleus. The catalysed reaction is 1D-myo-inositol hexakisphosphate + ATP = 5-diphospho-1D-myo-inositol 1,2,3,4,6-pentakisphosphate + ADP. It carries out the reaction 1-diphospho-1D-myo-inositol 2,3,4,5,6-pentakisphosphate + ATP + H(+) = 1,5-bis(diphospho)-1D-myo-inositol 2,3,4,6-tetrakisphosphate + ADP. Converts inositol hexakisphosphate (InsP6) to diphosphoinositol pentakisphosphate (InsP7/PP-InsP5). Converts 1,3,4,5,6-pentakisphosphate (InsP5) to PP-InsP4. This Mus musculus (Mouse) protein is Inositol hexakisphosphate kinase 1 (Ip6k1).